The following is a 414-amino-acid chain: Probable elongation factor 1-gamma 1 (414 aa).

A GST N-terminal domain is found at 1 to 82 (MALVLHTYKG…YVSRLNGDNS (82 aa)). The 129-residue stretch at 87-215 (SLIEYAQIEQ…VKQTEAVPPI (129 aa)) folds into the GST C-terminal domain. Residues 214–224 (PIASKKAAQPA) show a composition bias toward low complexity. The interval 214-260 (PIASKKAAQPAKPKEEPKKKEAPVAEAPKLAEEEEAPKPKAKNPLDL) is disordered. A compositionally biased stretch (basic and acidic residues) spans 225–236 (KPKEEPKKKEAP). One can recognise an EF-1-gamma C-terminal domain in the interval 254–414 (AKNPLDLLPP…EALLDAKCFK (161 aa)).

In terms of assembly, EF-1 is composed of four subunits: alpha, beta, delta, and gamma.

Functionally, probably plays a role in anchoring the complex to other cellular components. This chain is Probable elongation factor 1-gamma 1, found in Arabidopsis thaliana (Mouse-ear cress).